A 99-amino-acid polypeptide reads, in one-letter code: Nucleoid-associated protein Cj1642 (99 aa).

The protein belongs to the YbaB/EbfC family. Homodimer.

It localises to the cytoplasm. Its subcellular location is the nucleoid. Its function is as follows. Binds to DNA and alters its conformation. May be involved in regulation of gene expression, nucleoid organization and DNA protection. In Campylobacter jejuni subsp. jejuni serotype O:2 (strain ATCC 700819 / NCTC 11168), this protein is Nucleoid-associated protein Cj1642.